The following is a 379-amino-acid chain: UPF0754 membrane protein ABC1518 (379 aa).

2 helical membrane passes run 1–21 and 358–378; these read MHWI…GAAT and LLGG…VHFF.

The protein belongs to the UPF0754 family.

It is found in the cell membrane. In Shouchella clausii (strain KSM-K16) (Alkalihalobacillus clausii), this protein is UPF0754 membrane protein ABC1518.